Here is a 310-residue protein sequence, read N- to C-terminus: Succinate dehydrogenase assembly factor 2, mitochondrial (310 aa).

Basic and acidic residues predominate over residues 35–48; that stretch reads LKDGSDEASPEVKA. The segment at 35 to 67 is disordered; the sequence is LKDGSDEASPEVKAHRANQANKAPNQFVPNTTS. The segment covering 52–67 has biased composition (polar residues); it reads NQANKAPNQFVPNTTS.

It belongs to the SDHAF2 family. Interacts with the flavoprotein subunit within the SDH catalytic dimer.

The protein resides in the mitochondrion matrix. In terms of biological role, plays an essential role in the assembly of succinate dehydrogenase (SDH), an enzyme complex (also referred to as respiratory complex II) that is a component of both the tricarboxylic acid (TCA) cycle and the mitochondrial electron transport chain, and which couples the oxidation of succinate to fumarate with the reduction of ubiquinone (coenzyme Q) to ubiquinol. Required for flavinylation (covalent attachment of FAD) of the flavoprotein subunit of the SDH catalytic dimer. The polypeptide is Succinate dehydrogenase assembly factor 2, mitochondrial (Penicillium rubens (strain ATCC 28089 / DSM 1075 / NRRL 1951 / Wisconsin 54-1255) (Penicillium chrysogenum)).